Reading from the N-terminus, the 394-residue chain is Elongation factor Tu (394 aa).

The 195-residue stretch at 10-204 (KEHANIGTIG…AVDDYIPTPE (195 aa)) folds into the tr-type G domain. A G1 region spans residues 19-26 (GHVDHGKT). GTP is bound at residue 19–26 (GHVDHGKT). Residue Thr-26 participates in Mg(2+) binding. Positions 60 to 64 (GITIN) are G2. Residues 81 to 84 (DCPG) are G3. GTP-binding positions include 81 to 85 (DCPGH) and 136 to 139 (NKVD). Positions 136 to 139 (NKVD) are G4. Residues 174-176 (SAL) are G5.

It belongs to the TRAFAC class translation factor GTPase superfamily. Classic translation factor GTPase family. EF-Tu/EF-1A subfamily. In terms of assembly, monomer.

It is found in the cytoplasm. It carries out the reaction GTP + H2O = GDP + phosphate + H(+). Functionally, GTP hydrolase that promotes the GTP-dependent binding of aminoacyl-tRNA to the A-site of ribosomes during protein biosynthesis. The polypeptide is Elongation factor Tu (Staphylococcus epidermidis (strain ATCC 35984 / DSM 28319 / BCRC 17069 / CCUG 31568 / BM 3577 / RP62A)).